A 133-amino-acid chain; its full sequence is ATP synthase epsilon chain (133 aa).

Belongs to the ATPase epsilon chain family. F-type ATPases have 2 components, CF(1) - the catalytic core - and CF(0) - the membrane proton channel. CF(1) has five subunits: alpha(3), beta(3), gamma(1), delta(1), epsilon(1). CF(0) has three main subunits: a, b and c.

The protein resides in the cell membrane. Functionally, produces ATP from ADP in the presence of a proton gradient across the membrane. This chain is ATP synthase epsilon chain (atpC), found in Clostridium acetobutylicum (strain ATCC 824 / DSM 792 / JCM 1419 / IAM 19013 / LMG 5710 / NBRC 13948 / NRRL B-527 / VKM B-1787 / 2291 / W).